The chain runs to 428 residues: C4-dicarboxylate transport protein (428 aa).

9 helical membrane passes run 8-28, 44-64, 76-96, 142-162, 184-204, 222-242, 289-309, 326-346, and 352-372; these read SLYVQVLTAIAIGILLGHFYP, LIKMVIAPVIFCTVVTGIAGM, VALLYFEVVSTIALIIGLIIV, IGAFASGNILQVLLFAVLFGF, VIFGIINMIMRLAPIGAFGAM, LIICFYITCILFVVVVLGSIA, VVGLVIPTGYSFNLDGTSIYL, IFHQITLLVVLLLSSKGAAGV, and IVLAATISAVGHLPVAGLALI.

Belongs to the dicarboxylate/amino acid:cation symporter (DAACS) (TC 2.A.23) family.

The protein localises to the cell inner membrane. Its function is as follows. Responsible for the transport of dicarboxylates such as succinate, fumarate, and malate from the periplasm across the membrane. In Klebsiella pneumoniae (strain 342), this protein is C4-dicarboxylate transport protein.